We begin with the raw amino-acid sequence, 248 residues long: MGQKIHPHGLRLGITSDWKSHWYADKNYAEYLAEDIRVREYLVKTLDRAGIADVVIERTRERVRVDIHTARPGIVIGRRGSEADRLRTSLEKLTGKQVALNILEVKNIDANAQLVAQSIAEQLTNRVAFRRAMRKAIQGAMRQPQVKGIKVVCSGRLGGAEMSRTERYHEGRVPLHTLRAEIDYGTYEAHTTFGRIGVKVWIYKGDVVGGRRESEINAPAERRGRGDRNGRPRRGGQRRQRSEQKQEG.

The region spanning 38–106 (VREYLVKTLD…QVALNILEVK (69 aa)) is the KH type-2 domain. The span at 213–230 (ESEINAPAERRGRGDRNG) shows a compositional bias: basic and acidic residues. Residues 213–248 (ESEINAPAERRGRGDRNGRPRRGGQRRQRSEQKQEG) form a disordered region.

This sequence belongs to the universal ribosomal protein uS3 family. As to quaternary structure, part of the 30S ribosomal subunit. Forms a tight complex with proteins S10 and S14.

Binds the lower part of the 30S subunit head. Binds mRNA in the 70S ribosome, positioning it for translation. The sequence is that of Small ribosomal subunit protein uS3 from Corynebacterium diphtheriae (strain ATCC 700971 / NCTC 13129 / Biotype gravis).